The sequence spans 622 residues: Modification methylase LlaI (622 aa).

This sequence belongs to the N(4)/N(6)-methyltransferase family.

The catalysed reaction is a 2'-deoxyadenosine in DNA + S-adenosyl-L-methionine = an N(6)-methyl-2'-deoxyadenosine in DNA + S-adenosyl-L-homocysteine + H(+). Functionally, an alpha subtype methylase that modifies unknown specific adenine residues, and protects the DNA from cleavage by the LlaI endonuclease. This Lactococcus lactis subsp. lactis (Streptococcus lactis) protein is Modification methylase LlaI.